Here is a 540-residue protein sequence, read N- to C-terminus: Probable pectinesterase/pectinesterase inhibitor 60 (540 aa).

A signal peptide spans 1 to 31; sequence MNIMMVQNISFLSLHLLLILLLCLRPLTTVA. The pectinesterase inhibitor 60 stretch occupies residues 32 to 185; the sequence is DGNSTNIDGW…SHLISNCLAV (154 aa). Asn34, Asn91, Asn95, Asn120, Asn161, and Asn195 each carry an N-linked (GlcNAc...) asparagine glycan. Positions 225–526 are pectinesterase 60; sequence NLVVAKDGSG…FSVGKFIAGT (302 aa). Substrate contacts are provided by Thr302 and Gln332. Asp355 acts as the Proton donor; for pectinesterase activity in catalysis. A disulfide bridge connects residues Cys369 and Cys389. Catalysis depends on Asp376, which acts as the Nucleophile; for pectinesterase activity. Residues Arg444 and Trp446 each coordinate substrate.

This sequence in the N-terminal section; belongs to the PMEI family. The protein in the C-terminal section; belongs to the pectinesterase family. Expressed in siliques.

The protein resides in the secreted. It localises to the cell wall. It catalyses the reaction [(1-&gt;4)-alpha-D-galacturonosyl methyl ester](n) + n H2O = [(1-&gt;4)-alpha-D-galacturonosyl](n) + n methanol + n H(+). Its pathway is glycan metabolism; pectin degradation; 2-dehydro-3-deoxy-D-gluconate from pectin: step 1/5. Acts in the modification of cell walls via demethylesterification of cell wall pectin. The protein is Probable pectinesterase/pectinesterase inhibitor 60 (PME60) of Arabidopsis thaliana (Mouse-ear cress).